The following is an 85-amino-acid chain: Large ribosomal subunit protein bL27 (85 aa).

The interval 1-27 is disordered; sequence MAHKKAGGSTKNGRDSQSKRLGVKRYG.

The protein belongs to the bacterial ribosomal protein bL27 family.

The polypeptide is Large ribosomal subunit protein bL27 (Halorhodospira halophila (strain DSM 244 / SL1) (Ectothiorhodospira halophila (strain DSM 244 / SL1))).